The sequence spans 845 residues: Meiotically up-regulated gene 4 protein (845 aa).

Residues 122-158 (LSTTDEQPKEPSIISISSSSSDPSSSPPPSSSLLKTP) are disordered. The span at 132–145 (PSIISISSSSSDPS) shows a compositional bias: low complexity. Residues 726 to 746 (FLVFLTFTGMTLFILYQLTFP) form a helical membrane-spanning segment.

The protein resides in the membrane. Its function is as follows. Has a role in meiosis. The protein is Meiotically up-regulated gene 4 protein (mug4) of Schizosaccharomyces pombe (strain 972 / ATCC 24843) (Fission yeast).